The primary structure comprises 473 residues: Rifampicin monooxygenase (473 aa).

Residues Thr-12, Glu-31, Lys-32, and Arg-41 each contribute to the FAD site. Arg-43 contacts rifampicin. Residues Gln-98, Val-122, and Thr-156 each coordinate FAD. Arg-196 is a rifampicin binding site. Asp-276 contributes to the FAD binding site. A rifampicin-binding site is contributed by Gly-285. Leu-289 and Asn-290 together coordinate FAD.

This sequence belongs to the rifampicin monooxygenase family. As to quaternary structure, homodimer. It depends on FAD as a cofactor.

It catalyses the reaction rifampicin + NADPH + O2 = rifampicin para-naphthoquinone carboxamide + NADP(+) + H2O + H(+). The catalysed reaction is rifampicin + NADH + O2 = rifampicin para-naphthoquinone carboxamide + NAD(+) + H2O + H(+). Functionally, monooxygenase that can modify rifampicin, thereby inactivating its antibiotic activity. It constitutes a secondary rifampicin resistance factor. The polypeptide is Rifampicin monooxygenase (Nocardia farcinica (strain IFM 10152)).